The following is a 627-amino-acid chain: E3 ubiquitin-protein ligase DTX1 (627 aa).

WWE domains follow at residues 14–94 (GLGF…PVRR) and 95–171 (NFYD…RLRR). 3 disordered regions span residues 222–254 (QRRK…ALVV), 269–327 (PATG…ALPV), and 368–398 (PPVS…KSKN). Pro residues-rich tracts occupy residues 230-248 (PAAP…PGGP) and 275-287 (EPAP…PRSP). Positions 240–243 (PPPL) match the SH3-binding motif. The segment covering 296–314 (PGQNNLSRPGPQRSTSVSA) has biased composition (polar residues). The span at 386-396 (RKTKKKHLKKS) shows a compositional bias: basic residues. Residues 418–479 (CTICMERLVT…DGSLQCPTCK (62 aa)) form an RING-type zinc finger.

The protein belongs to the Deltex family. In terms of assembly, homodimer. May form a heterodimer with other members of the Deltex family. Interacts with NOTCH1 via its N-terminal region and EIF3F, the interaction is required for NOTCH1 deubiquitination. Interacts with EP300. Forms a heterodimer with BBAP; the heterodimerization leading to an increase of in vitro ubiquitin ligase activity. Interacts with ITCH. Post-translationally, ubiquitinated; undergoes 'Lys-29'-linked polyubiquitination catalyzed by ITCH. As to expression, predominantly expressed in the brain and testis. Weakly expressed in the thymus, spleen and ovary. Predominantly expressed in regions containing post-mitotic differentiating neurons.

Its subcellular location is the cytoplasm. It is found in the nucleus. The catalysed reaction is S-ubiquitinyl-[E2 ubiquitin-conjugating enzyme]-L-cysteine + [acceptor protein]-L-lysine = [E2 ubiquitin-conjugating enzyme]-L-cysteine + N(6)-ubiquitinyl-[acceptor protein]-L-lysine.. It participates in protein modification; protein ubiquitination. Regulator of Notch signaling, a signaling pathway involved in cell-cell communications that regulates a broad spectrum of cell-fate determinations. Mainly acts as a positive regulator of Notch, but it also acts as a negative regulator, depending on the developmental and cell context. Mediates the antineural activity of Notch, possibly by inhibiting the transcriptional activation mediated by MATCH1. Involved in neurogenesis, lymphogenesis and myogenesis, and may also be involved in MZB (Marginal zone B) cell differentiation. Promotes B-cell development at the expense of T-cell development, suggesting that it can antagonize NOTCH1. Functions as an ubiquitin ligase protein in vivo, mediating ubiquitination and promoting degradation of MEKK1, suggesting that it may regulate the Notch pathway via some ubiquitin ligase activity. The chain is E3 ubiquitin-protein ligase DTX1 (Dtx1) from Mus musculus (Mouse).